Reading from the N-terminus, the 1992-residue chain is MALVVHLKTVTELRGKGDRIAKVTFRGLSFFSRVLENCEDEARFEQAFRWPIGSQVDGDEMLEIQVFNYSKVFTNRLIGTFRMVLQKVVEEGHLEVSDTLIDDNNTAIQTTISIEIKYQTMDGSVKVWSDGEFLDIPDDLDGTFQFETDSLLSGRSQSSGTSPGRSIHGIPTFRKAGKGVFSAMKLGKTRTSKDDHKKGDDAAILDAEDLDRKAMRLGGILDPDTISLASVTAVTTNVSNKRSKPDIKMEPSSGRPVDYQISVTVIEARQLVGLNMDPVVCVEIGEEKKYTSMKESTNCPYYNEYFVFDFHVPPDVMFDKIIKISVIHSKNLLRSGTLVGTFKLDVGTVYTQPEHQFHHKWAMLSDPDDITTGCKGYVKCDIAVVGKGDNIKTPHKASEADEDDIEGNLLLPEGVPSERQWARFYVKIYRAEGLPKMNTSIMANVKKAFIGENRDLVDPYVLVQFAGQKGKTSVQKSSYEPIWNEQVIFTEMFPPLCRRLKVQIRDSDKVNDVAIGTHFIDLRKVSNDGDKGFLPTMGPAWVNMYGSTRNYTLMDEHQDLNEGLGEGVSFRARLLISIAVEILDTTSAEIMSSTEVHMEPVSNISESATGKMEEFFLFGSFLEATMIDRKIGDKPISFEVTIGNYGNQIDGVSKPALAKKKKEGGGESEEEESELIHNSSEEEAEDDGDLTSVPSTPPMKPVITDRNYFHLPYFEKKPCIYIKSWWQDQRRRLYNSNIMDKIADKLEEGLNDVQEIIKTEKAYPERRLRGVLEELSTSCSRFVTLANKDQNLSGRTKLDRERLKSCMREMESMGQQAKTIRTQVKRNTVRDKLKLVLNFLQRLRFLADEPQHSIPDVFIWMISNNKRIAYARIPSKDILYSIVDEEMGKDCGKVKAVFLRLPGKKGFGPAGWTVQAKLEMYLWLGLNKQRKDFLIGLPSGFEENKAVKGIGIQAVPPISLVYNMKQVFQLRAHMYQARSLFAADTSGLSDPFARVFFSTHSQVTEVLSETLCPTWDQLLVFDNVELYGEAGELRDDPPIIVIELYDQDTVGKAEFIGRTFAKPLTKMVDEHYGPPRFPPQLEYYQIYRGNCAAGDLLAAFELLQIGPAGRAALPPIDGPTDSDRGPILPVPLGIRPVLSRYRIEVLFWGLRDLKRVNLAQVDRPRVDIECAGKGVQSALIQNYKKNPNFSTLVKWFEVDLPENELLHPPLNIRVVDCRAFGRYILVGSHAVTTLRKFIYSPPDKTANNWAHTGDIVVNMSPEPNIKKMDTVVKIEATTDAVVKVDLNEDEKEKEKKKKKKKKGEEVEEEEPDESMLDWWSKYFASIETMMENLRAQEAAQAEAEEREDLEIAAESAEIKADDFPMKGTKPKEKSKDKKSTKDKKKNNDGTEKRPPKPKVDELMVYNKELESEFGSFEDWLHTFNLYRGKAGDDDDHNVVDEDRIVGRFKGSLCMYKLPLSEEITREAGFDPNMGMFQSIPHNDPINVLVRIYIIRATDLHPADINGKADPYIVIKLGKSDIRDKENYISKQLNPVFGKSFDIEATFPMESMLTVAVYDWDLVGTDDLIGETKIDLENRYYSKHRATCGIASNYSVHGYNVWRDPQKPAQILAKLCKEGKLDGPHYGPGGRVKVANRIFLGPTEIEDESGLKKQTEEHLALTVLRHWEEIPRVGCKLIPEHVETRPLLNPDKPGIEQGRIEMWVDMFPMDVPAPGPAIDISPRKPKRYELRVIIWNTDEVILEDDDYFTGEKSSDIFVRGWLKGQQEDKQDTDVHYHSLTGEGNFNWRFVFPFDYLMAEEKIVISKKESMFSWDETEYKIPARLTLQVWDADHFSADDFLGAIELDLNKFPRGAKTAKQCSLDMVLKEHELPTISIFKQKRVKGWWPFVAQNENDEFELTGKVEAELHLLTAEEAEKSPVGLGRNDPEPLEKPNRPDTSLMWFMNPLRSIRYFIWHNYRWLILKALALLLLLLLVGLFLYSIPGYLVKKLLGA.

3 C2 domains span residues 1 to 98, 241 to 362, and 405 to 536; these read MALV…EVSD, KRSK…HKWA, and IEGN…FLPT. Over 1-1958 the chain is Cytoplasmic; it reads MALVVHLKTV…IRYFIWHNYR (1958 aa). Positions 655–699 are disordered; sequence PALAKKKKEGGGESEEEESELIHNSSEEEAEDDGDLTSVPSTPPM. C2 domains are found at residues 952–1077 and 1124–1250; these read IQAV…PPRF and RGPI…NNWA. Ca(2+)-binding residues include Asp984, Asp990, Asp1046, and Asp1048. Positions 1282–1363 form a coiled coil; the sequence is VKVDLNEDEK…ESAEIKADDF (82 aa). Disordered stretches follow at residues 1288–1311 and 1354–1399; these read EDEK…EEEP and ESAE…KPKV. The segment covering 1356-1399 has biased composition (basic and acidic residues); that stretch reads AEIKADDFPMKGTKPKEKSKDKKSTKDKKKNNDGTEKRPPKPKV. C2 domains lie at 1470 to 1588 and 1711 to 1860; these read DPNM…ATCG and PAPG…KQCS. Residues Asp1503, Asp1509, Asp1558, Asp1560, Asp1566, Asp1831, Ser1834, and Asp1837 each coordinate Ca(2+). A helical membrane pass occupies residues 1959 to 1979; sequence WLILKALALLLLLLLVGLFLY. Over 1980 to 1992 the chain is Extracellular; the sequence is SIPGYLVKKLLGA.

This sequence belongs to the ferlin family. Ca(2+) is required as a cofactor.

The protein resides in the cytoplasmic vesicle. The protein localises to the secretory vesicle. It localises to the synaptic vesicle membrane. It is found in the basolateral cell membrane. Its subcellular location is the endoplasmic reticulum membrane. The protein resides in the golgi apparatus membrane. The protein localises to the presynaptic cell membrane. It localises to the cell membrane. In terms of biological role, key calcium ion sensor involved in the Ca(2+)-triggered synaptic vesicle-plasma membrane fusion and in the control of neurotransmitter release at these output synapses. The protein is Otoferlin (otof) of Danio rerio (Zebrafish).